The sequence spans 28 residues: Arylalkyl acylamidase (28 aa).

As to quaternary structure, homotetramer.

The enzyme catalyses an N-acetylarylalkylamine + H2O = an aralkylamine + acetate. With respect to regulation, activated by divalent metal ions. Inhibited by certain thiol reagents. Its function is as follows. Shows a strict specificity for N-acetyl arylalkylamines but not acetanilide derivatives. This is Arylalkyl acylamidase from Pseudomonas putida (Arthrobacter siderocapsulatus).